We begin with the raw amino-acid sequence, 279 residues long: Putative pyruvate, phosphate dikinase regulatory protein (279 aa).

153-160 (GVSRTSKT) contributes to the ADP binding site.

It belongs to the pyruvate, phosphate/water dikinase regulatory protein family. PDRP subfamily.

It carries out the reaction N(tele)-phospho-L-histidyl/L-threonyl-[pyruvate, phosphate dikinase] + ADP = N(tele)-phospho-L-histidyl/O-phospho-L-threonyl-[pyruvate, phosphate dikinase] + AMP + H(+). The catalysed reaction is N(tele)-phospho-L-histidyl/O-phospho-L-threonyl-[pyruvate, phosphate dikinase] + phosphate + H(+) = N(tele)-phospho-L-histidyl/L-threonyl-[pyruvate, phosphate dikinase] + diphosphate. Bifunctional serine/threonine kinase and phosphorylase involved in the regulation of the pyruvate, phosphate dikinase (PPDK) by catalyzing its phosphorylation/dephosphorylation. The protein is Putative pyruvate, phosphate dikinase regulatory protein of Rhodopseudomonas palustris (strain HaA2).